The primary structure comprises 191 residues: Transmembrane protein 17B (191 aa).

A run of 4 helical transmembrane segments spans residues 50–70, 83–103, 115–135, and 147–167; these read MSLYFNMWFFPFWWISEVVML, FILITILIVMTLIEAIRLYLG, LAGFWLLTFLLQFPLILFQLF, and GVHIILALFIFAEVLFGFVAL.

Belongs to the TMEM17 family. As to quaternary structure, part of the tectonic-like complex (also named B9 complex).

The protein resides in the cell projection. Its subcellular location is the cilium membrane. Transmembrane component of the tectonic-like complex, a complex localized at the transition zone of primary cilia and acting as a barrier that prevents diffusion of transmembrane proteins between the cilia and plasma membranes. Required for ciliogenesis and sonic hedgehog/SHH signaling. The sequence is that of Transmembrane protein 17B (Tmem17b) from Danio rerio (Zebrafish).